The chain runs to 54 residues: Photosystem II reaction center protein K (54 aa).

Residues 1-17 constitute a propeptide that is removed on maturation; sequence MSFENFAIITLKENVFA. Residues 33 to 53 traverse the membrane as a helical segment; that stretch reads LPIIPVLFLLLAFVWQSAVKF.

This sequence belongs to the PsbK family. PSII is composed of 1 copy each of membrane proteins PsbA, PsbB, PsbC, PsbD, PsbE, PsbF, PsbH, PsbI, PsbJ, PsbK, PsbL, PsbM, PsbT, PsbY, PsbZ, Psb30/Ycf12, at least 3 peripheral proteins of the oxygen-evolving complex and a large number of cofactors. It forms dimeric complexes.

The protein resides in the plastid. It is found in the chloroplast thylakoid membrane. Its function is as follows. One of the components of the core complex of photosystem II (PSII). PSII is a light-driven water:plastoquinone oxidoreductase that uses light energy to abstract electrons from H(2)O, generating O(2) and a proton gradient subsequently used for ATP formation. It consists of a core antenna complex that captures photons, and an electron transfer chain that converts photonic excitation into a charge separation. The protein is Photosystem II reaction center protein K of Euglena deses.